We begin with the raw amino-acid sequence, 255 residues long: uncharacterized protein (255 aa).

The N-terminal stretch at Met-1–Gly-23 is a signal peptide. Residue Cys-24 is the site of N-palmitoyl cysteine attachment. Cys-24 is lipidated: S-diacylglycerol cysteine.

Belongs to the staphylococcal tandem lipoprotein family.

Its subcellular location is the cell membrane. This is an uncharacterized protein from Staphylococcus aureus (strain NCTC 8325 / PS 47).